Here is a 315-residue protein sequence, read N- to C-terminus: Acetaldehyde dehydrogenase 2 (315 aa).

Residue 11–14 (SGNI) coordinates NAD(+). The active-site Acyl-thioester intermediate is the Cys129. Residues 160 to 168 (SAGPGTRSN) and Asn290 contribute to the NAD(+) site.

This sequence belongs to the acetaldehyde dehydrogenase family.

The enzyme catalyses acetaldehyde + NAD(+) + CoA = acetyl-CoA + NADH + H(+). The sequence is that of Acetaldehyde dehydrogenase 2 from Mycobacterium sp. (strain KMS).